The following is a 234-amino-acid chain: BTB/POZ domain-containing protein KCTD5 (234 aa).

N-acetylalanine is present on Ala-2. The BTB domain occupies 44–146; it reads KWVRLNVGGT…LVKDKIRERD (103 aa). The tract at residues 213-234 is disordered; the sequence is PYGTTSEPSEKAKILQERGSRM. A compositionally biased stretch (basic and acidic residues) spans 220–234; it reads PSEKAKILQERGSRM.

Homopentamer. Interacts (via C-terminus) with GRASP55/GORASP2. Interacts with CUL3 and with ubiquitinated proteins. Interacts with CRY1.

The protein localises to the cytoplasm. It localises to the cytosol. It is found in the nucleus. Its function is as follows. Its interaction with CUL3 suggests that it may act as a substrate adapter in some E3 ligase complex. Does not affect the function of Kv channel Kv2.1/KCNB1, Kv1.2/KCNA2, Kv4.2/KCND2 and Kv3.4/KCNC4. The sequence is that of BTB/POZ domain-containing protein KCTD5 (Kctd5) from Rattus norvegicus (Rat).